We begin with the raw amino-acid sequence, 101 residues long: Large ribosomal subunit protein eL30 (101 aa).

This sequence belongs to the eukaryotic ribosomal protein eL30 family.

The polypeptide is Large ribosomal subunit protein eL30 (Pyrobaculum calidifontis (strain DSM 21063 / JCM 11548 / VA1)).